Here is a 145-residue protein sequence, read N- to C-terminus: U20-hexatoxin-Hi1a (145 aa).

Positions 1–16 (MYQFLIIVILAAFVNG) are cleaved as a signal peptide. Thyroglobulin type-1 domains lie at 20–73 (KTEC…GQPM) and 82–145 (ACEC…RLEC). 5 disulfides stabilise this stretch: Cys-23/Cys-45, Cys-56/Cys-63, Cys-85/Cys-106, Cys-117/Cys-124, and Cys-126/Cys-145.

In terms of tissue distribution, expressed by the venom gland.

The protein localises to the secreted. Its function is as follows. Cysteine proteinase inhibitor. The sequence is that of U20-hexatoxin-Hi1a from Hadronyche infensa (Fraser island funnel-web spider).